A 180-amino-acid polypeptide reads, in one-letter code: MKCLLLALGLALMCGIQATNIPQTMQDLDLQEVAGKWHSVAMAASDISLLDSESAPLRVYIEKLRPTPEDNLEIILREGENKGCAEKKIFAEKTESPAEFKINYLDEDTVFALDTDYKNYLFLCMKNAATPGQSLVCQYLARTQMVDEEIMEKFRRALQPLPGRVQIVPDLTRMAERCRI.

Residues 1–18 form the signal peptide; sequence MKCLLLALGLALMCGIQA. Disulfide bonds link Cys84–Cys178 and Cys124–Cys137.

The protein belongs to the calycin superfamily. Lipocalin family. In terms of assembly, monomer.

It localises to the secreted. Lactoglobulin is the primary component of whey, it binds retinol and is probably involved in the transport of that molecule. This Equus caballus (Horse) protein is Beta-lactoglobulin-1 (LGB1).